The chain runs to 384 residues: Probable RNA 3'-terminal phosphate cyclase-like protein (384 aa).

The protein belongs to the RNA 3'-terminal cyclase family. Type 2 subfamily. In terms of assembly, part of the small subunit (SSU) processome, composed of more than 70 proteins and the RNA chaperone small nucleolar RNA (snoRNA) U3.

Its subcellular location is the nucleus. It localises to the nucleolus. Its function is as follows. Part of the small subunit (SSU) processome, first precursor of the small eukaryotic ribosomal subunit. During the assembly of the SSU processome in the nucleolus, many ribosome biogenesis factors, an RNA chaperone and ribosomal proteins associate with the nascent pre-rRNA and work in concert to generate RNA folding, modifications, rearrangements and cleavage as well as targeted degradation of pre-ribosomal RNA by the RNA exosome. Does not have cyclase activity. The polypeptide is Probable RNA 3'-terminal phosphate cyclase-like protein (Rtc1) (Drosophila melanogaster (Fruit fly)).